A 413-amino-acid chain; its full sequence is uncharacterized protein (413 aa).

The next 12 membrane-spanning stretches (helical) occupy residues 42–62 (FLGGFSSFSILYCVQSILPVF), 75–95 (LSLSAATATMSIGTLFIGPLS), 109–129 (LIAAVLTIICSISNNWTVIVF), 133–153 (LTGLALSGVVAVAMTYIVEEV), 157–179 (SVSFCMGLYISGNTIGGCSGRIL), 191–211 (IAFIVIGFFSLMSSCLFLYFL), 238–258 (PTLLILFAIGFMLMGSFITIF), 265–285 (LMLSPFFLSSSNIGFLSIIYL), 304–324 (SSILRIALLLMILGLLMTQYN), 326–346 (IFIIILGLVIFSSGFFASHSI), 362–382 (ATSLYLFFYYLGSSIFGTFGG), and 383–403 (FFWFYLKWIGISSFIIIILIF).

Belongs to the major facilitator superfamily.

The protein resides in the cell membrane. This is an uncharacterized protein from Buchnera aphidicola subsp. Schizaphis graminum (strain Sg).